Here is a 234-residue protein sequence, read N- to C-terminus: Small ribosomal subunit protein eS4 (234 aa).

The region spanning 39-102 (MPLVVVLRDL…NANYRVVIGM (64 aa)) is the S4 RNA-binding domain.

The protein belongs to the eukaryotic ribosomal protein eS4 family.

The polypeptide is Small ribosomal subunit protein eS4 (Methanocella arvoryzae (strain DSM 22066 / NBRC 105507 / MRE50)).